The following is an 85-amino-acid chain: Large ribosomal subunit protein bL27 (85 aa).

The protein belongs to the bacterial ribosomal protein bL27 family.

The polypeptide is Large ribosomal subunit protein bL27 (Solibacter usitatus (strain Ellin6076)).